A 346-amino-acid chain; its full sequence is Dihydroorotate dehydrogenase (quinone) (346 aa).

FMN is bound by residues Ala62–Lys66 and Thr86. Lys66 provides a ligand contact to substrate. Residue Asn111–Phe115 coordinates substrate. FMN contacts are provided by Asn142 and Asn175. A substrate-binding site is contributed by Asn175. Ser178 acts as the Nucleophile in catalysis. Position 180 (Asn180) interacts with substrate. FMN-binding residues include Lys211 and Val239. Asn240 to Thr241 lines the substrate pocket. FMN contacts are provided by residues Gly261, Gly289, and Tyr310–Thr311.

Belongs to the dihydroorotate dehydrogenase family. Type 2 subfamily. As to quaternary structure, monomer. FMN is required as a cofactor.

The protein localises to the cell membrane. The enzyme catalyses (S)-dihydroorotate + a quinone = orotate + a quinol. Its pathway is pyrimidine metabolism; UMP biosynthesis via de novo pathway; orotate from (S)-dihydroorotate (quinone route): step 1/1. Functionally, catalyzes the conversion of dihydroorotate to orotate with quinone as electron acceptor. This chain is Dihydroorotate dehydrogenase (quinone), found in Thermus thermophilus (strain ATCC 27634 / DSM 579 / HB8).